The following is a 419-amino-acid chain: UDP-N-acetylglucosamine 1-carboxyvinyltransferase 2 (419 aa).

Position 22 to 23 (22 to 23) interacts with phosphoenolpyruvate; the sequence is KN. Arg-92 lines the UDP-N-acetyl-alpha-D-glucosamine pocket. The Proton donor role is filled by Cys-116. The residue at position 116 (Cys-116) is a 2-(S-cysteinyl)pyruvic acid O-phosphothioketal. Residues 121 to 125, Asp-306, and Val-328 each bind UDP-N-acetyl-alpha-D-glucosamine; that span reads RPIDL.

Belongs to the EPSP synthase family. MurA subfamily.

The protein localises to the cytoplasm. The enzyme catalyses phosphoenolpyruvate + UDP-N-acetyl-alpha-D-glucosamine = UDP-N-acetyl-3-O-(1-carboxyvinyl)-alpha-D-glucosamine + phosphate. Its pathway is cell wall biogenesis; peptidoglycan biosynthesis. Its function is as follows. Cell wall formation. Adds enolpyruvyl to UDP-N-acetylglucosamine. The polypeptide is UDP-N-acetylglucosamine 1-carboxyvinyltransferase 2 (Carboxydothermus hydrogenoformans (strain ATCC BAA-161 / DSM 6008 / Z-2901)).